A 194-amino-acid chain; its full sequence is Imidazoleglycerol-phosphate dehydratase (194 aa).

Belongs to the imidazoleglycerol-phosphate dehydratase family.

It localises to the cytoplasm. The enzyme catalyses D-erythro-1-(imidazol-4-yl)glycerol 3-phosphate = 3-(imidazol-4-yl)-2-oxopropyl phosphate + H2O. It participates in amino-acid biosynthesis; L-histidine biosynthesis; L-histidine from 5-phospho-alpha-D-ribose 1-diphosphate: step 6/9. This is Imidazoleglycerol-phosphate dehydratase from Bacillus subtilis (strain 168).